Consider the following 207-residue polypeptide: Cytochrome c biogenesis ATP-binding export protein CcmA (207 aa).

In terms of domain architecture, ABC transporter spans 6-207; that stretch reads LCAEGLECIR…RGDCRSLNLS (202 aa). 38 to 45 is an ATP binding site; it reads GANGAGKT.

This sequence belongs to the ABC transporter superfamily. CcmA exporter (TC 3.A.1.107) family. The complex is composed of two ATP-binding proteins (CcmA) and two transmembrane proteins (CcmB).

The protein resides in the cell inner membrane. The catalysed reaction is heme b(in) + ATP + H2O = heme b(out) + ADP + phosphate + H(+). In terms of biological role, part of the ABC transporter complex CcmAB involved in the biogenesis of c-type cytochromes; once thought to export heme, this seems not to be the case, but its exact role is uncertain. Responsible for energy coupling to the transport system. This chain is Cytochrome c biogenesis ATP-binding export protein CcmA, found in Methylococcus capsulatus (strain ATCC 33009 / NCIMB 11132 / Bath).